Here is a 172-residue protein sequence, read N- to C-terminus: Adenine phosphoribosyltransferase (172 aa).

The protein belongs to the purine/pyrimidine phosphoribosyltransferase family. As to quaternary structure, homodimer.

The protein resides in the cytoplasm. It carries out the reaction AMP + diphosphate = 5-phospho-alpha-D-ribose 1-diphosphate + adenine. It functions in the pathway purine metabolism; AMP biosynthesis via salvage pathway; AMP from adenine: step 1/1. In terms of biological role, catalyzes a salvage reaction resulting in the formation of AMP, that is energically less costly than de novo synthesis. The protein is Adenine phosphoribosyltransferase of Rippkaea orientalis (strain PCC 8801 / RF-1) (Cyanothece sp. (strain PCC 8801)).